Reading from the N-terminus, the 440-residue chain is Ribosomal protein uS12 methylthiotransferase RimO (440 aa).

The MTTase N-terminal domain occupies 7–117 (PKISFVSLGC…VLDAVHRALP (111 aa)). [4Fe-4S] cluster-binding residues include C16, C52, C81, C148, C152, and C155. In terms of domain architecture, Radical SAM core spans 134 to 370 (LTPRHYAYLK…MARQQKISAQ (237 aa)). The TRAM domain occupies 373–439 (KRKVGTRQQV…EYDLHGSVAG (67 aa)).

This sequence belongs to the methylthiotransferase family. RimO subfamily. [4Fe-4S] cluster is required as a cofactor.

It localises to the cytoplasm. The enzyme catalyses L-aspartate(89)-[ribosomal protein uS12]-hydrogen + (sulfur carrier)-SH + AH2 + 2 S-adenosyl-L-methionine = 3-methylsulfanyl-L-aspartate(89)-[ribosomal protein uS12]-hydrogen + (sulfur carrier)-H + 5'-deoxyadenosine + L-methionine + A + S-adenosyl-L-homocysteine + 2 H(+). Functionally, catalyzes the methylthiolation of an aspartic acid residue of ribosomal protein uS12. The polypeptide is Ribosomal protein uS12 methylthiotransferase RimO (Afipia carboxidovorans (strain ATCC 49405 / DSM 1227 / KCTC 32145 / OM5) (Oligotropha carboxidovorans)).